Consider the following 378-residue polypeptide: Tetraacyldisaccharide 4'-kinase (378 aa).

Position 63–70 (63–70) interacts with ATP; that stretch reads AVGGAGKT.

It belongs to the LpxK family.

It catalyses the reaction a lipid A disaccharide + ATP = a lipid IVA + ADP + H(+). It functions in the pathway glycolipid biosynthesis; lipid IV(A) biosynthesis; lipid IV(A) from (3R)-3-hydroxytetradecanoyl-[acyl-carrier-protein] and UDP-N-acetyl-alpha-D-glucosamine: step 6/6. In terms of biological role, transfers the gamma-phosphate of ATP to the 4'-position of a tetraacyldisaccharide 1-phosphate intermediate (termed DS-1-P) to form tetraacyldisaccharide 1,4'-bis-phosphate (lipid IVA). The protein is Tetraacyldisaccharide 4'-kinase of Anaeromyxobacter dehalogenans (strain 2CP-C).